Consider the following 232-residue polypeptide: Large ribosomal subunit protein uL1 (232 aa).

It belongs to the universal ribosomal protein uL1 family. As to quaternary structure, part of the 50S ribosomal subunit.

In terms of biological role, binds directly to 23S rRNA. The L1 stalk is quite mobile in the ribosome, and is involved in E site tRNA release. Functionally, protein L1 is also a translational repressor protein, it controls the translation of the L11 operon by binding to its mRNA. This is Large ribosomal subunit protein uL1 from Sinorhizobium fredii (strain NBRC 101917 / NGR234).